Reading from the N-terminus, the 234-residue chain is UPF0502 protein Reut_B4455 (234 aa).

The protein belongs to the UPF0502 family.

This chain is UPF0502 protein Reut_B4455, found in Cupriavidus pinatubonensis (strain JMP 134 / LMG 1197) (Cupriavidus necator (strain JMP 134)).